The chain runs to 372 residues: Chaperone protein DnaJ (372 aa).

The J domain maps to 5-69; it reads DYYEVLGVDR…QKKARYDQFG (65 aa). The CR-type zinc finger occupies 129-211; sequence GKETEIEIPR…CSGKGKVRKR (83 aa). Positions 142, 145, 159, 162, 185, 188, 199, and 202 each coordinate Zn(2+). CXXCXGXG motif repeat units follow at residues 142–149, 159–166, 185–192, and 199–206; these read CGTCHGSG, CSHCGGSG, CNYCEGTG, and CATCSGKG.

It belongs to the DnaJ family. As to quaternary structure, homodimer. It depends on Zn(2+) as a cofactor.

The protein resides in the cytoplasm. Its function is as follows. Participates actively in the response to hyperosmotic and heat shock by preventing the aggregation of stress-denatured proteins and by disaggregating proteins, also in an autonomous, DnaK-independent fashion. Unfolded proteins bind initially to DnaJ; upon interaction with the DnaJ-bound protein, DnaK hydrolyzes its bound ATP, resulting in the formation of a stable complex. GrpE releases ADP from DnaK; ATP binding to DnaK triggers the release of the substrate protein, thus completing the reaction cycle. Several rounds of ATP-dependent interactions between DnaJ, DnaK and GrpE are required for fully efficient folding. Also involved, together with DnaK and GrpE, in the DNA replication of plasmids through activation of initiation proteins. This is Chaperone protein DnaJ from Shouchella clausii (strain KSM-K16) (Alkalihalobacillus clausii).